A 415-amino-acid chain; its full sequence is Serine hydroxymethyltransferase (415 aa).

(6S)-5,6,7,8-tetrahydrofolate-binding positions include L119 and 123 to 125 (GHL). K228 bears the N6-(pyridoxal phosphate)lysine mark. 353–355 (SPF) provides a ligand contact to (6S)-5,6,7,8-tetrahydrofolate.

Belongs to the SHMT family. In terms of assembly, homodimer. Requires pyridoxal 5'-phosphate as cofactor.

It localises to the cytoplasm. The enzyme catalyses (6R)-5,10-methylene-5,6,7,8-tetrahydrofolate + glycine + H2O = (6S)-5,6,7,8-tetrahydrofolate + L-serine. The protein operates within one-carbon metabolism; tetrahydrofolate interconversion. It functions in the pathway amino-acid biosynthesis; glycine biosynthesis; glycine from L-serine: step 1/1. In terms of biological role, catalyzes the reversible interconversion of serine and glycine with tetrahydrofolate (THF) serving as the one-carbon carrier. Also exhibits THF-independent aldolase activity toward beta-hydroxyamino acids, producing glycine and aldehydes, via a retro-aldol mechanism. The protein is Serine hydroxymethyltransferase of Halorubrum lacusprofundi (strain ATCC 49239 / DSM 5036 / JCM 8891 / ACAM 34).